A 494-amino-acid polypeptide reads, in one-letter code: Succinoglycan biosynthesis transport protein ExoT (494 aa).

13 helical membrane-spanning segments follow: residues 16 to 36 (WSVLSKTGTFGLKFVTVPILA), 44 to 64 (FGAVAVALTVVQFLAMIGGAG), 82 to 102 (SVFWANLAIALMMALGLFVFA), 105 to 125 (LATLLGAPEAAYLLRIMSLLI), 157 to 177 (LGAVIAVLLALLGFGIWSLLA), 215 to 235 (FGMMGSEIANFITFQSPMVVI), 253 to 273 (FASIPNQVVLSAVMGVLFPTF), 297 to 317 (LLAPMMFGLWALAEPAMLVLF), 321 to 341 (WAYAWPVLGLLALSKGILTPC), 343 to 363 (TFIPYLKGVGQGAVLFWWALI), 384 to 404 (AMIWLCIVNAVTLVGYSWVVF), 421 to 441 (PMIAALLMALVVRFLLEHFGA), and 447 to 467 (VLQLIAGTAIGSVIYTVLILL).

The protein belongs to the polysaccharide synthase family.

Its subcellular location is the cell membrane. Its pathway is glycan metabolism; exopolysaccharide biosynthesis. This Rhizobium meliloti (strain 1021) (Ensifer meliloti) protein is Succinoglycan biosynthesis transport protein ExoT (exoT).